Consider the following 281-residue polypeptide: Putative zinc-binding protein ORF11 (281 aa).

The chain is Putative zinc-binding protein ORF11 (ORF11) from Ictaluridae (bullhead catfishes).